The chain runs to 194 residues: Oligoribonuclease (194 aa).

Residues 11 to 174 form the Exonuclease domain; sequence LIWIDLEMTG…SDVRDSIDEL (164 aa). The active site involves Y132.

This sequence belongs to the oligoribonuclease family.

Its subcellular location is the cytoplasm. 3'-to-5' exoribonuclease specific for small oligoribonucleotides. This Xanthomonas axonopodis pv. citri (strain 306) protein is Oligoribonuclease.